The sequence spans 118 residues: Fluoride-specific ion channel FluC 2 (118 aa).

Transmembrane regions (helical) follow at residues Met1–Ile21, Phe33–Gly53, Gly55–Phe75, and Thr93–Met113. Positions 70 and 73 each coordinate Na(+).

The protein belongs to the fluoride channel Fluc/FEX (TC 1.A.43) family.

It is found in the cell membrane. The enzyme catalyses fluoride(in) = fluoride(out). With respect to regulation, na(+) is not transported, but it plays an essential structural role and its presence is essential for fluoride channel function. Functionally, fluoride-specific ion channel. Important for reducing fluoride concentration in the cell, thus reducing its toxicity. This Bacillus thuringiensis subsp. konkukian (strain 97-27) protein is Fluoride-specific ion channel FluC 2.